The primary structure comprises 910 residues: Myelin regulatory factor-like protein (910 aa).

A DNA-binding region (NDT80) is located at residues 142-405 (GCSYPQQPLC…SNPGQFENDS (264 aa)). The disordered stretch occupies residues 189-208 (RSRSSEVQDPDSEGQNRMPT). The region spanning 451–559 (SDSRAKQNIQ…KLTNNLEERI (109 aa)) is the Peptidase S74 domain. A coiled-coil region spans residues 543–575 (GAVKQLCKLTNNLEERIEELEIWNRKLARLKRL). The chain crosses the membrane as a helical span at residues 628–648 (LVITLIAVMAFCALTIVALYI). Residues 661-682 (LPPSNITSSQEPALLPTASSSA) are disordered. Over residues 663-682 (PSNITSSQEPALLPTASSSA) the composition is skewed to polar residues.

It belongs to the MRF family.

It is found in the membrane. This Homo sapiens (Human) protein is Myelin regulatory factor-like protein (MYRFL).